A 433-amino-acid polypeptide reads, in one-letter code: Trigger factor (433 aa).

The region spanning 161 to 246 is the PPIase FKBP-type domain; that stretch reads GDRVTMDFVG…AKKVEARDLP (86 aa).

The protein belongs to the FKBP-type PPIase family. Tig subfamily.

The protein resides in the cytoplasm. It catalyses the reaction [protein]-peptidylproline (omega=180) = [protein]-peptidylproline (omega=0). Its function is as follows. Involved in protein export. Acts as a chaperone by maintaining the newly synthesized protein in an open conformation. Functions as a peptidyl-prolyl cis-trans isomerase. This Idiomarina loihiensis (strain ATCC BAA-735 / DSM 15497 / L2-TR) protein is Trigger factor.